A 247-amino-acid polypeptide reads, in one-letter code: uncharacterized protein (247 aa).

The next 3 helical transmembrane spans lie at 108-128 (WYIN…FLII), 136-156 (IFSV…NIIC), and 194-214 (GAKL…LFFI).

It localises to the membrane. This is an uncharacterized protein from Caenorhabditis elegans.